We begin with the raw amino-acid sequence, 207 residues long: p-benzoquinone reductase (207 aa).

The region spanning 5-196 is the Flavodoxin-like domain; it reads IQIVFYSSYG…QIARFQGKHV (192 aa). FMN-binding positions include 11-16, 84-86, 119-125, and His140; these read SSYGHI, TRF, and STASQHG. Position 13 (Tyr13) interacts with NADP(+).

It belongs to the WrbA family. Homodimer. The cofactor is FMN.

It catalyses the reaction 1,4-benzoquinone + NADPH + H(+) = hydroquinone + NADP(+). The protein operates within xenobiotic degradation; 4-nitrophenol degradation. Functionally, involved in the degradation of para-nitrophenol (PNP). Catalyzes the reduction of p-benzoquinone to hydroquinone. This chain is p-benzoquinone reductase (pnpB), found in Pseudomonas sp. (strain WBC-3).